The primary structure comprises 236 residues: Endonuclease V (236 aa).

Positions 47 and 115 each coordinate Mg(2+).

The protein belongs to the endonuclease V family. The cofactor is Mg(2+).

The protein resides in the cytoplasm. It carries out the reaction Endonucleolytic cleavage at apurinic or apyrimidinic sites to products with a 5'-phosphate.. Its function is as follows. DNA repair enzyme involved in the repair of deaminated bases. Selectively cleaves double-stranded DNA at the second phosphodiester bond 3' to a deoxyinosine leaving behind the intact lesion on the nicked DNA. This Xanthomonas campestris pv. campestris (strain 8004) protein is Endonuclease V.